A 329-amino-acid polypeptide reads, in one-letter code: (12E)-labda-8(17),12,14-triene synthase (329 aa).

2 residues coordinate Mg(2+): Asp90 and Glu95. Residues 90 to 95 carry the DDXXXE motif motif; the sequence is DDMHGE. Residue Arg184 coordinates substrate. Mg(2+)-binding residues include Asn230 and Ser234. The NXXXSXXXE motif motif lies at 230 to 238; the sequence is NDLASYERE. Arg237 contacts substrate. Glu238 provides a ligand contact to Mg(2+). 316-317 is a binding site for substrate; the sequence is RY.

Belongs to the terpene synthase family. Mg(2+) is required as a cofactor.

It carries out the reaction (+)-copalyl diphosphate = (12E)-labda-8(17),12,14-triene + diphosphate. Involved in the biosynthesis of the mercapturic acid derivative diterpene cyslabdan A, a potentiator of the beta-lactam antibiotic imipenem. Catalyzes the conversion of (+)-copalyl diphosphate to yield labda-8(17),12(E),14-triene (biformene). The polypeptide is (12E)-labda-8(17),12,14-triene synthase (Streptomyces cyslabdanicus).